Reading from the N-terminus, the 56-residue chain is Large ribosomal subunit protein bL33C (56 aa).

This sequence belongs to the bacterial ribosomal protein bL33 family.

The polypeptide is Large ribosomal subunit protein bL33C (Sorangium cellulosum (strain So ce56) (Polyangium cellulosum (strain So ce56))).